Here is a 361-residue protein sequence, read N- to C-terminus: Probable dual-specificity RNA methyltransferase RlmN (361 aa).

Residue Glu-91 is the Proton acceptor of the active site. Positions 97-329 (QHYGLSVCVT…KKKGGNCVVR (233 aa)) constitute a Radical SAM core domain. The cysteines at positions 104 and 340 are disulfide-linked. Residues Cys-111, Cys-115, and Cys-118 each contribute to the [4Fe-4S] cluster site. S-adenosyl-L-methionine-binding positions include 163 to 164 (GE), Ser-195, 218 to 220 (SLH), and Asn-296. Cys-340 serves as the catalytic S-methylcysteine intermediate.

Belongs to the radical SAM superfamily. RlmN family. Requires [4Fe-4S] cluster as cofactor.

The protein localises to the cytoplasm. It catalyses the reaction adenosine(2503) in 23S rRNA + 2 reduced [2Fe-2S]-[ferredoxin] + 2 S-adenosyl-L-methionine = 2-methyladenosine(2503) in 23S rRNA + 5'-deoxyadenosine + L-methionine + 2 oxidized [2Fe-2S]-[ferredoxin] + S-adenosyl-L-homocysteine. The catalysed reaction is adenosine(37) in tRNA + 2 reduced [2Fe-2S]-[ferredoxin] + 2 S-adenosyl-L-methionine = 2-methyladenosine(37) in tRNA + 5'-deoxyadenosine + L-methionine + 2 oxidized [2Fe-2S]-[ferredoxin] + S-adenosyl-L-homocysteine. Specifically methylates position 2 of adenine 2503 in 23S rRNA and position 2 of adenine 37 in tRNAs. The sequence is that of Probable dual-specificity RNA methyltransferase RlmN from Streptococcus pneumoniae (strain P1031).